The following is a 147-amino-acid chain: D-aminoacyl-tRNA deacylase (147 aa).

The Gly-cisPro motif, important for rejection of L-amino acids motif lies at glycine 137 to proline 138.

It belongs to the DTD family. As to quaternary structure, homodimer.

The protein localises to the cytoplasm. The enzyme catalyses glycyl-tRNA(Ala) + H2O = tRNA(Ala) + glycine + H(+). It catalyses the reaction a D-aminoacyl-tRNA + H2O = a tRNA + a D-alpha-amino acid + H(+). Functionally, an aminoacyl-tRNA editing enzyme that deacylates mischarged D-aminoacyl-tRNAs. Also deacylates mischarged glycyl-tRNA(Ala), protecting cells against glycine mischarging by AlaRS. Acts via tRNA-based rather than protein-based catalysis; rejects L-amino acids rather than detecting D-amino acids in the active site. By recycling D-aminoacyl-tRNA to D-amino acids and free tRNA molecules, this enzyme counteracts the toxicity associated with the formation of D-aminoacyl-tRNA entities in vivo and helps enforce protein L-homochirality. This chain is D-aminoacyl-tRNA deacylase, found in Levilactobacillus brevis (strain ATCC 367 / BCRC 12310 / CIP 105137 / JCM 1170 / LMG 11437 / NCIMB 947 / NCTC 947) (Lactobacillus brevis).